The sequence spans 885 residues: Insulin receptor substrate 1-A (885 aa).

Residues 1 to 56 enclose the IRS-type PTB domain; it reads MNIRRCGHSENFFFIEVGRSAVTGAGEFWMQVDDSVVAQNMHETILEAMKALSDEF. The interval 56–225 is disordered; it reads FRPRSKSQSS…GGFISSDEYG (170 aa). Composition is skewed to low complexity over residues 61–75, 99–109, 176–197, and 205–217; these read KSQSSSNCSNPISVP, SATATSPAGGA, SPSATSPVSLSSSSTSGHGSTS, and SSASISGSPSDGG. At Ser-104 the chain carries Phosphoserine. Tyr-257 carries the post-translational modification Phosphotyrosine; by INSR. The YXXM motif 1 motif lies at 257–260; it reads YICM. Polar residues-rich tracts occupy residues 263–276 and 296–313; these read SSSHLQRGPQQRYQ and SSGTSPPTVSHQKTPSQS. Disordered stretches follow at residues 263 to 282 and 293 to 313; these read SSSHLQRGPQQRYQPSRGEE and RTHSSGTSPPTVSHQKTPSQS. Short sequence motifs (YXXM motif) lie at residues 318-321, 364-367, 381-384, 409-412, and 451-454; these read YTEM, YMPM, YMMM, and YINM. Tyr-364 and Tyr-381 each carry phosphotyrosine; by INSR. Tyr-409 is modified (phosphotyrosine). The disordered stretch occupies residues 501-581; the sequence is NLRISANSGH…LPPEPKSPGE (81 aa). Residues 504-515 are compositionally biased toward polar residues; that stretch reads ISANSGHNLYTE. The segment covering 516-526 has biased composition (low complexity); the sequence is DSSSSSTSSDS. Phosphotyrosine; by INSR is present on residues Tyr-582 and Tyr-620. A GRB2-binding region spans residues 582–584; that stretch reads YVN. The YXXM motif 7 signature appears at 620-623; that stretch reads YMNM. Residues 637–660 are compositionally biased toward polar residues; the sequence is TSSYEPPNKPVNSVCPTETCSSSR. The interval 637 to 665 is disordered; the sequence is TSSYEPPNKPVNSVCPTETCSSSRPPIRG. Residue Tyr-672 is modified to Phosphotyrosine; by INSR. Short sequence motifs (YXXM motif) lie at residues 672–675 and 706–709; these read YMSM and YAEM. The tract at residues 732-803 is disordered; the sequence is ASRSSLLGQG…SGEDVKRHSS (72 aa). 2 stretches are compositionally biased toward polar residues: residues 743 to 758 and 777 to 792; these read GPSAFTRVSLSPNRNP and ETFSSTPTTARVTTGP. Phosphotyrosine; by INSR is present on residues Tyr-834 and Tyr-866.

In terms of assembly, interacts with the NPXY motif of tyrosine-phosphorylated igf1r and insr via the PTB domain. Binds to phosphatidylinositol 3-kinase p85 subunit at a low level in vitro prior to phosphorylation. Binding is greatly enhanced following tyrosine phosphorylation by insr and probably occurs via the phosphorylated YXXM motifs. Phosphorylation of Tyr-582 is required for grb2-binding.

Functionally, may mediate the control of various cellular processes by insulin. When phosphorylated by the insulin receptor binds specifically to various cellular proteins containing SH2 domains such as phosphatidylinositol 3-kinase p85 subunit or grb2. Activates phosphatidylinositol 3-kinase when bound to the regulatory p85 subunit. The sequence is that of Insulin receptor substrate 1-A (irs1-a) from Xenopus laevis (African clawed frog).